We begin with the raw amino-acid sequence, 158 residues long: Proteinase inhibitor type-2 (158 aa).

The signal sequence occupies residues 1–24; sequence MAIHKEVSFLAYLLVLGMLLFVSA. A run of 2 repeats spans residues 29–86 and 87–146. Disulfide bonds link cysteine 33–cysteine 121, cysteine 37–cysteine 117, cysteine 45–cysteine 127, cysteine 57–cysteine 94, cysteine 60–cysteine 78, cysteine 61–cysteine 90, cysteine 67–cysteine 103, and cysteine 120–cysteine 138.

The protein belongs to the protease inhibitor I20 (potato type II proteinase inhibitor) family.

The sequence is that of Proteinase inhibitor type-2 from Solanum tuberosum (Potato).